Reading from the N-terminus, the 408-residue chain is Tripartite motif containing 13 (408 aa).

The RING-type zinc-finger motif lies at 10-58; it reads CPICCSLFDDPRVLPCSHNFCKKCLDGVLEENSRTMQWRPSSFKCPTCR. The segment at 89–131 adopts a B box-type zinc-finger fold; the sequence is PKMPVCKEHSDQPLNIFCSTDLKLICGSCATTGEHKKHVFSSI. Residues Cys-94, His-97, Cys-117, and His-123 each contribute to the Zn(2+) site. The chain crosses the membrane as a helical span at residues 322 to 342; sequence ILVVACLILLLVTFLCAYPFI.

It is found in the endoplasmic reticulum membrane. It participates in protein modification; protein ubiquitination. E3 ubiquitin ligase involved in the retrotranslocation and turnover of membrane and secretory proteins from the ER through a set of processes named ER-associated degradation (ERAD). This process acts on misfolded proteins as well as in the regulated degradation of correctly folded proteins. The chain is Tripartite motif containing 13 (trim13) from Xenopus tropicalis (Western clawed frog).